Consider the following 153-residue polypeptide: SsrA-binding protein (153 aa).

It belongs to the SmpB family.

The protein localises to the cytoplasm. Required for rescue of stalled ribosomes mediated by trans-translation. Binds to transfer-messenger RNA (tmRNA), required for stable association of tmRNA with ribosomes. tmRNA and SmpB together mimic tRNA shape, replacing the anticodon stem-loop with SmpB. tmRNA is encoded by the ssrA gene; the 2 termini fold to resemble tRNA(Ala) and it encodes a 'tag peptide', a short internal open reading frame. During trans-translation Ala-aminoacylated tmRNA acts like a tRNA, entering the A-site of stalled ribosomes, displacing the stalled mRNA. The ribosome then switches to translate the ORF on the tmRNA; the nascent peptide is terminated with the 'tag peptide' encoded by the tmRNA and targeted for degradation. The ribosome is freed to recommence translation, which seems to be the essential function of trans-translation. This Desulforudis audaxviator (strain MP104C) protein is SsrA-binding protein.